We begin with the raw amino-acid sequence, 189 residues long: Elongation factor P 2 (189 aa).

The protein belongs to the elongation factor P family.

The protein localises to the cytoplasm. It functions in the pathway protein biosynthesis; polypeptide chain elongation. Its function is as follows. Involved in peptide bond synthesis. Stimulates efficient translation and peptide-bond synthesis on native or reconstituted 70S ribosomes in vitro. Probably functions indirectly by altering the affinity of the ribosome for aminoacyl-tRNA, thus increasing their reactivity as acceptors for peptidyl transferase. The chain is Elongation factor P 2 (efp2) from Lactobacillus johnsonii (strain CNCM I-12250 / La1 / NCC 533).